We begin with the raw amino-acid sequence, 641 residues long: White-opaque regulator 3 (641 aa).

Over residues 13-27 (ANVNHQQLSQDTNSI) the composition is skewed to polar residues. 3 disordered regions span residues 13 to 38 (ANVN…QQQP), 146 to 245 (QLAS…PMTR), and 258 to 287 (PIIY…PEPR). Low complexity-rich tracts occupy residues 28 to 38 (PQQQLQQQQQP) and 151 to 160 (QNQDQNQSQN). The segment covering 161–172 (RYEQSSMTSIHT) has biased composition (polar residues). A compositionally biased stretch (low complexity) spans 173 to 184 (NDNSSSVNNSPN). The segment covering 193–204 (STFQPQHSNEGS) has biased composition (polar residues). Low complexity-rich tracts occupy residues 216 to 242 (QQQQ…PQQP) and 264 to 280 (SSNS…NSSS). The dksA C4-type zinc-finger motif lies at 317–337 (CRRCGSEIPLAERRFVLCPSC). Disordered regions lie at residues 366–409 (LSKE…KVCQ), 480–507 (MSHQ…PQPH), 522–550 (NSGV…HNGS), and 568–641 (LQLQ…YPNN). Residues 379 to 400 (QNNKSNEDQNNESRRGSQEKPA) are compositionally biased toward basic and acidic residues. Pro residues predominate over residues 486 to 495 (QPPPPPPPPL). Residues 522–533 (NSGVAGIQQPNN) are compositionally biased toward polar residues. Positions 569–579 (QLQQQQQQQQQ) are enriched in low complexity. Residues 597-606 (SFPPPPPPPL) are compositionally biased toward pro residues. Residues 610–641 (QHQGLQQYSHAQQQQQQQHQQQQPYHQEYPNN) show a composition bias toward low complexity.

It is found in the nucleus. Functionally, transcription factor that modulates the white-opaque switch. This chain is White-opaque regulator 3 (WOR3), found in Candida albicans (strain SC5314 / ATCC MYA-2876) (Yeast).